Here is a 434-residue protein sequence, read N- to C-terminus: Ribitol-5-phosphate xylosyltransferase 1 (434 aa).

Residues 1-7 (MRFFRRK) are Cytoplasmic-facing. Residues 8-28 (IAIIVILAYAIFSLYAAYNVF) form a helical; Signal-anchor for type II membrane protein membrane-spanning segment. Over 29–434 (FSKRVISRVH…VLEENFFKIT (406 aa)) the chain is Extracellular.

This sequence belongs to the TMEM5 family.

The protein resides in the golgi apparatus membrane. It carries out the reaction 3-O-[Rib-ol-P-Rib-ol-P-3-beta-D-GalNAc-(1-&gt;3)-beta-D-GlcNAc-(1-&gt;4)-(O-6-P-alpha-D-Man)]-Thr-[protein] + UDP-alpha-D-xylose = 3-O-[beta-D-Xyl-(1-&gt;4)-Rib-ol-P-Rib-ol-P-3-beta-D-GalNAc-(1-&gt;3)-beta-D-GlcNAc-(1-&gt;4)-(O-6-P-alpha-D-Man)]-Thr-[protein] + UDP + H(+). It functions in the pathway protein modification; protein glycosylation. In terms of biological role, acts as a UDP-D-xylose:ribitol-5-phosphate beta1,4-xylosyltransferase, which catalyzes the transfer of UDP-D-xylose to ribitol 5-phosphate (Rbo5P) to form the Xylbeta1-4Rbo5P linkage on O-mannosyl glycan. Participates in the biosynthesis of the phosphorylated O-mannosyl trisaccharide (N-acetylgalactosamine-beta-3-N-acetylglucosamine-beta-4-(phosphate-6-)mannose), a carbohydrate structure present in alpha-dystroglycan (DAG1), which is required for binding laminin G-like domain-containing extracellular proteins with high affinity. The chain is Ribitol-5-phosphate xylosyltransferase 1 (rxylt1) from Danio rerio (Zebrafish).